The primary structure comprises 652 residues: Carboxypeptidase Z (652 aa).

Positions 1 to 18 (MPPPLPLLLLTVLVVAAA) are cleaved as a signal peptide. The region spanning 27-160 (NPAGECHRPP…TREDEGCYDP (134 aa)) is the FZ domain. Cystine bridges form between Cys43/Cys109, Cys51/Cys102, Cys93/Cys129, Cys118/Cys157, and Cys122/Cys146. Residues 186-502 (SHHSYAQMVR…ESLLNFVETV (317 aa)) form the Peptidase M14 domain. 2 residues coordinate Zn(2+): His248 and Glu251. A glycan (N-linked (GlcNAc...) asparagine) is linked at Asn281. Residue His380 participates in Zn(2+) binding. The active-site Proton donor/acceptor is the Glu472. Residues 595–629 (LRRTGPHDPLGGASSLGEATEPDPLRARRQPSADG) are disordered.

This sequence belongs to the peptidase M14 family. It depends on Zn(2+) as a cofactor. In terms of tissue distribution, in placenta, it is present within invasive trophoblasts and in the surrounding extracellular space. Also present in amnion cells, but is not readily apparent in the extracellular matrix of this cell type. Present in normal pituitary gland and neoplastic pituitary gland (especially POMC-, GH- and PRL-producing adenomas) (at protein level). Widely expressed.

The protein localises to the secreted. The protein resides in the extracellular space. It localises to the extracellular matrix. Its activity is regulated as follows. Inhibited by 2-mercaptomethyl-3-guanidinoethylthiopropanoic acid (MGTA) and guanidinoethylmercaptosuccinic acid (GEMSA). Inhibited by chelating agents such as EDTA and EGTA. Its function is as follows. Cleaves substrates with C-terminal arginine residues. Probably modulates the Wnt signaling pathway, by cleaving some undefined protein. May play a role in cleavage during prohormone processing. The polypeptide is Carboxypeptidase Z (CPZ) (Homo sapiens (Human)).